Reading from the N-terminus, the 301-residue chain is Protein FdhE homolog (301 aa).

The protein belongs to the FdhE family.

It localises to the cytoplasm. In terms of biological role, necessary for formate dehydrogenase activity. The chain is Protein FdhE homolog from Shewanella baltica (strain OS195).